Reading from the N-terminus, the 203-residue chain is Dephospho-CoA kinase (203 aa).

One can recognise a DPCK domain in the interval 4–203 (VIGITGGIAT…EEGYIQSESE (200 aa)). 12-17 (ATGKST) is a binding site for ATP.

This sequence belongs to the CoaE family.

It is found in the cytoplasm. It carries out the reaction 3'-dephospho-CoA + ATP = ADP + CoA + H(+). Its pathway is cofactor biosynthesis; coenzyme A biosynthesis; CoA from (R)-pantothenate: step 5/5. Catalyzes the phosphorylation of the 3'-hydroxyl group of dephosphocoenzyme A to form coenzyme A. The chain is Dephospho-CoA kinase from Staphylococcus epidermidis (strain ATCC 35984 / DSM 28319 / BCRC 17069 / CCUG 31568 / BM 3577 / RP62A).